The chain runs to 1024 residues: Hemolysin, plasmid (1024 aa).

Positions 20-32 are enriched in polar residues; that stretch reads AANKLHSAGQSTK. The tract at residues 20-39 is disordered; sequence AANKLHSAGQSTKDALKKAA. A run of 3 helical transmembrane segments spans residues 238–260, 268–327, and 365–411; these read IGAG…ILSN, KAAA…LSIA, and DASL…GILE. Residues Lys-564 and Lys-690 are each lipidated (N6-myristoyl lysine). Hemolysin-type calcium-binding repeat units lie at residues 732–749, 750–767, 768–785, 786–803, 816–833, and 834–851; these read FGSK…DDLI, EGND…NDTL, SGGN…NDKL, IGVA…DDEF, FGGK…ADLL, and DGGE…NDIY.

Belongs to the RTX prokaryotic toxin (TC 1.C.11) family. Myristoylated by HlyC; the toxin only becomes active when modified. Mainly myristoylated, while a minor fraction is acylated with pentadecanoyl (C15:0; 26%) and heptadecanoyl (C17:0; 6%) fatty acyl groups. Fatty acylation is involved in binding to host membranes and promotes the irreversible insertion of Hemolysin into the host cell membrane. Can be activated by both myristoylation and palmitoylation, but HlyC catalyzes lysine myristoylation.

It localises to the secreted. It is found in the host cell membrane. Bacterial hemolysins are exotoxins that attack blood cell membranes and cause cell rupture by forming a pore. The sequence is that of Hemolysin, plasmid from Escherichia coli.